The sequence spans 428 residues: Enolase (428 aa).

Glutamine 167 serves as a coordination point for (2R)-2-phosphoglycerate. Catalysis depends on glutamate 209, which acts as the Proton donor. Residues aspartate 246, glutamate 289, and aspartate 316 each contribute to the Mg(2+) site. Positions 341, 370, 371, and 392 each coordinate (2R)-2-phosphoglycerate. Lysine 341 acts as the Proton acceptor in catalysis.

It belongs to the enolase family. As to quaternary structure, component of the RNA degradosome, a multiprotein complex involved in RNA processing and mRNA degradation. Requires Mg(2+) as cofactor.

It is found in the cytoplasm. The protein resides in the secreted. The protein localises to the cell surface. It carries out the reaction (2R)-2-phosphoglycerate = phosphoenolpyruvate + H2O. It functions in the pathway carbohydrate degradation; glycolysis; pyruvate from D-glyceraldehyde 3-phosphate: step 4/5. Its function is as follows. Catalyzes the reversible conversion of 2-phosphoglycerate (2-PG) into phosphoenolpyruvate (PEP). It is essential for the degradation of carbohydrates via glycolysis. In Saccharophagus degradans (strain 2-40 / ATCC 43961 / DSM 17024), this protein is Enolase.